The chain runs to 815 residues: DNA topoisomerase 1 (815 aa).

The Toprim domain maps to 3 to 119 (KHLLIVESPA…QRIVFTEITP (117 aa)). The Mg(2+) site is built by Glu-9 and Asp-82. Positions 133–573 (ASDLVDAQQA…KFWVPFKELV (441 aa)) constitute a Topo IA-type catalytic domain. Residues 167-172 (SAGRVQ) form an interaction with DNA region. Tyr-308 (O-(5'-phospho-DNA)-tyrosine intermediate) is an active-site residue. The interval 759 to 815 (TGKPARKNFSTKKTATKNETRKQTTKKRTTDAKATKKVSDKPVKKQIKKRIAPNITQ) is disordered. The segment covering 774–801 (TKNETRKQTTKKRTTDAKATKKVSDKPV) has biased composition (basic and acidic residues).

The protein belongs to the type IA topoisomerase family. In terms of assembly, monomer. It depends on Mg(2+) as a cofactor.

It carries out the reaction ATP-independent breakage of single-stranded DNA, followed by passage and rejoining.. Functionally, releases the supercoiling and torsional tension of DNA, which is introduced during the DNA replication and transcription, by transiently cleaving and rejoining one strand of the DNA duplex. Introduces a single-strand break via transesterification at a target site in duplex DNA. The scissile phosphodiester is attacked by the catalytic tyrosine of the enzyme, resulting in the formation of a DNA-(5'-phosphotyrosyl)-enzyme intermediate and the expulsion of a 3'-OH DNA strand. The free DNA strand then undergoes passage around the unbroken strand, thus removing DNA supercoils. Finally, in the religation step, the DNA 3'-OH attacks the covalent intermediate to expel the active-site tyrosine and restore the DNA phosphodiester backbone. This Xylella fastidiosa (strain Temecula1 / ATCC 700964) protein is DNA topoisomerase 1.